Reading from the N-terminus, the 152-residue chain is Transcriptional regulator MraZ (152 aa).

2 consecutive SpoVT-AbrB domains span residues 5–52 (LNPI…THPQ) and 81–124 (ATEV…GKSQ).

The protein belongs to the MraZ family. In terms of assembly, forms oligomers.

Its subcellular location is the cytoplasm. The protein localises to the nucleoid. This Coxiella burnetii (strain Dugway 5J108-111) protein is Transcriptional regulator MraZ.